A 341-amino-acid polypeptide reads, in one-letter code: Glyceraldehyde-3-phosphate dehydrogenase 2 (341 aa).

NAD(+) contacts are provided by residues 12–13 (RI), Arg-78, and Thr-120. D-glyceraldehyde 3-phosphate contacts are provided by residues 152–154 (SCT) and Thr-183. The active-site Nucleophile is the Cys-153. Residue Asn-184 coordinates NAD(+). Residues Arg-198, 211–212 (TG), and Arg-234 contribute to the D-glyceraldehyde 3-phosphate site. Asn-313 contributes to the NAD(+) binding site.

The protein belongs to the glyceraldehyde-3-phosphate dehydrogenase family. As to quaternary structure, homotetramer.

Its subcellular location is the cytoplasm. It catalyses the reaction D-glyceraldehyde 3-phosphate + phosphate + NAD(+) = (2R)-3-phospho-glyceroyl phosphate + NADH + H(+). It functions in the pathway carbohydrate degradation; glycolysis; pyruvate from D-glyceraldehyde 3-phosphate: step 1/5. In terms of biological role, catalyzes the oxidative phosphorylation of glyceraldehyde 3-phosphate (G3P) to 1,3-bisphosphoglycerate (BPG) using the cofactor NAD. The first reaction step involves the formation of a hemiacetal intermediate between G3P and a cysteine residue, and this hemiacetal intermediate is then oxidized to a thioester, with concomitant reduction of NAD to NADH. The reduced NADH is then exchanged with the second NAD, and the thioester is attacked by a nucleophilic inorganic phosphate to produce BPG. The sequence is that of Glyceraldehyde-3-phosphate dehydrogenase 2 (gapA2) from Staphylococcus aureus (strain COL).